We begin with the raw amino-acid sequence, 340 residues long: Ketol-acid reductoisomerase (NADP(+)) (340 aa).

Residues 3–183 form the KARI N-terminal Rossmann domain; the sequence is LSVYYDKDCN…GGGRTGIIET (181 aa). Residues 26–29, serine 54, and 84–87 contribute to the NADP(+) site; these read FGSQ and DELQ. Residue histidine 109 is part of the active site. Glycine 135 contributes to the NADP(+) binding site. The 146-residue stretch at 184 to 329 folds into the KARI C-terminal knotted domain; it reads TFKDETETDL…ERLRAMMPWI (146 aa). Mg(2+) is bound by residues aspartate 192, glutamate 196, glutamate 228, and glutamate 232. Substrate is bound at residue serine 253.

It belongs to the ketol-acid reductoisomerase family. Requires Mg(2+) as cofactor.

The catalysed reaction is (2R)-2,3-dihydroxy-3-methylbutanoate + NADP(+) = (2S)-2-acetolactate + NADPH + H(+). The enzyme catalyses (2R,3R)-2,3-dihydroxy-3-methylpentanoate + NADP(+) = (S)-2-ethyl-2-hydroxy-3-oxobutanoate + NADPH + H(+). Its pathway is amino-acid biosynthesis; L-isoleucine biosynthesis; L-isoleucine from 2-oxobutanoate: step 2/4. It functions in the pathway amino-acid biosynthesis; L-valine biosynthesis; L-valine from pyruvate: step 2/4. Its function is as follows. Involved in the biosynthesis of branched-chain amino acids (BCAA). Catalyzes an alkyl-migration followed by a ketol-acid reduction of (S)-2-acetolactate (S2AL) to yield (R)-2,3-dihydroxy-isovalerate. In the isomerase reaction, S2AL is rearranged via a Mg-dependent methyl migration to produce 3-hydroxy-3-methyl-2-ketobutyrate (HMKB). In the reductase reaction, this 2-ketoacid undergoes a metal-dependent reduction by NADPH to yield (R)-2,3-dihydroxy-isovalerate. The sequence is that of Ketol-acid reductoisomerase (NADP(+)) from Wolinella succinogenes (strain ATCC 29543 / DSM 1740 / CCUG 13145 / JCM 31913 / LMG 7466 / NCTC 11488 / FDC 602W) (Vibrio succinogenes).